A 31-amino-acid polypeptide reads, in one-letter code: Cyclotide mra3 (31 aa).

Cystine bridges form between Cys-5–Cys-21, Cys-9–Cys-23, and Cys-14–Cys-28.

This is a cyclic peptide. Post-translationally, contains 3 disulfide bonds.

Functionally, probably participates in a plant defense mechanism. In Melicytus ramiflorus (Whitey wood), this protein is Cyclotide mra3.